Consider the following 465-residue polypeptide: FAD-dependent monooxygenase pyr5 (465 aa).

The N-terminal stretch at 1–16 (MRVLIIGGSIAGLTLA) is a signal peptide. FAD is bound by residues Glu30, Gly44, and Arg103. Tyr210 is an active-site residue. Positions 306 and 319 each coordinate FAD. The chain crosses the membrane as a helical span at residues 440–456 (PTFPLTVAGLCLVAIVI).

Belongs to the paxM FAD-dependent monooxygenase family. Requires FAD as cofactor.

It is found in the membrane. The catalysed reaction is 4-hydroxy-3-[(2E,6E)-farnesyl]-6-(pyridin-3-yl)-2H-pyran-2-one + NADPH + O2 + H(+) = 2-oxo-3-[(8S)-epoxy-(2E,6E)-farnesyl]-6-(pyridin-3-yl)-2H-pyran-4-olate + NADP(+) + H2O. Its pathway is secondary metabolite biosynthesis; terpenoid biosynthesis. Functionally, FAD-dependent monooxygenase; part of the gene cluster that mediates the biosynthesis of pyripyropene A, a specific human acyl-coenzyme A:cholesterol acyltransferase 2 inhibitor. The first step of the pathway is the synthesis of nicotinyl-CoA from nicotinic acid by the nicotinic acid-CoA ligase pyr1. Nicotinyl-CoA is then a substrate of polyketide synthase pyr2 to produce 4-hydroxy-6-(3-pyridinyl)-2H-pyran-2-one (HPPO) which is further prenylated by the polyprenyl transferase pyr6 to yield farnesyl-HPPO. The next steps consist of an epoxidation of farnesyl-HPPO to epoxyfarnesyl-HPPO by FAD-dependent monooxygenase pyr5 and a cyclization of the terpenoid portion by the terpene cyclase pyr4 to yield deacetyl-pyripyropene E. The 2 cytochrome P450 monooxygenases pyr3 and pyr9, and the 2 acetyltransferases pyr7 and pyr8 are involved in the conversion of deacetyl-pyripyropene E into pyripyropene A through several cycles of oxidation and acetylation steps. Pyr7 acetylates deacetyl-pyripyropene E to pyripyropene E which is oxidized to 11-deacetyl-pyripyropene O by pyr3, which is in turn acetylated into pyripyropene O by pyr8. Pyripyropene O is then oxidized to deacetyl-pyripyropene A by pyr9. Deacetyl-pyripyropene A is finally acetylated to pyripyropene A by pyr8. The protein is FAD-dependent monooxygenase pyr5 of Aspergillus fumigatus (strain ATCC MYA-4609 / CBS 101355 / FGSC A1100 / Af293) (Neosartorya fumigata).